The chain runs to 109 residues: Ig kappa chain V region K16-167 (109 aa).

The segment at 1–23 (ALVMTQTPSPVSAAVGGTVTISC) is framework-1. The segment at 24-35 (QASQSVYSNNLS) is complementarity-determining-1. The framework-2 stretch occupies residues 36–50 (WFQQKPGQPPKLLIY). Positions 51–57 (KASTLAS) are complementarity-determining-2. The tract at residues 58–89 (GVPSRFKGSGSGTQFTLPISGVECDDAATYYC) is framework-3. The interval 90-99 (QGTNTGNNIV) is complementarity-determining-3. The segment at 100–109 (FGTGTEVVVK) is framework-4.

This Oryctolagus cuniculus (Rabbit) protein is Ig kappa chain V region K16-167.